Reading from the N-terminus, the 205-residue chain is Protease (205 aa).

Catalysis depends on residues histidine 54, aspartate 71, and cysteine 122.

This sequence belongs to the peptidase C5 family. As to quaternary structure, interacts with protease cofactor pVI-C; this interaction is necessary for protease activation.

It is found in the virion. It localises to the host nucleus. The catalysed reaction is Cleaves proteins of the adenovirus and its host cell at two consensus sites: -Yaa-Xaa-Gly-Gly-|-Xaa- and -Yaa-Xaa-Gly-Xaa-|-Gly- (in which Yaa is Met, Ile or Leu, and Xaa is any amino acid).. With respect to regulation, requires DNA and protease cofactor for maximal activation. Inside nascent virions, becomes partially activated by binding to the viral DNA, allowing it to cleave the cofactor that binds to the protease and fully activates it. Actin, like the viral protease cofactor, seems to act as a cofactor in the cleavage of cytokeratin 18 and of actin itself. Functionally, cleaves viral precursor proteins (pTP, pIIIa, pVI, pVII, pVIII, and pX) inside newly assembled particles giving rise to mature virions. Protease complexed to its cofactor slides along the viral DNA to specifically locate and cleave the viral precursors. Mature virions have a weakened organization compared to the unmature virions, thereby facilitating subsequent uncoating. Without maturation, the particle lacks infectivity and is unable to uncoat. Late in adenovirus infection, in the cytoplasm, may participate in the cytoskeleton destruction. Cleaves host cell cytoskeletal keratins K7 and K18. The polypeptide is Protease (Homo sapiens (Human)).